The sequence spans 217 residues: UDP-N-acetylglucosamine transferase subunit ALG14 (217 aa).

The Lumenal portion of the chain corresponds to 1–3 (MLS). A helical membrane pass occupies residues 4–26 (ILILAATAAGLVILLFQRLWTVL). Over 27 to 217 (GPHHVTPRES…PKSVYLGRIV (191 aa)) the chain is Cytoplasmic.

The protein belongs to the ALG14 family. Forms with ALG13 the active heterodimeric UDP-N-acetylglucosamine transferase complex.

The protein resides in the endoplasmic reticulum membrane. Its function is as follows. Part of the UDP-N-acetylglucosamine transferase complex that operates in the biosynthetic pathway of dolichol-linked oligosaccharides, the glycan precursors employed in protein asparagine (N)-glycosylation. The assembly of dolichol-linked oligosaccharides begins on the cytosolic side of the endoplasmic reticulum membrane and finishes in its lumen. The sequential addition of sugars to dolichol pyrophosphate produces dolichol-linked oligosaccharides containing fourteen sugars, including two GlcNAcs, nine mannoses and three glucoses. Once assembled, the oligosaccharides are transferred from the lipid to nascent proteins by oligosaccharyltransferases. Functions as a protein-membrane adapter recruiting ALG13 at the cytoplasmic face of the endoplasmic reticulum, where the complex catalyzes the second step of dolichol pyrophosphate biosynthesis, transferring a beta1,4-linked N-acetylglucosamine (GlcNAc) from UDP-GlcNAc to GlcNAc-pyrophosphatedolichol (Gn-PDol) to produce N,N'-diacetylchitobiosyl diphosphodolichol. N,N'-diacetylchitobiosyl diphosphodolichol is a substrate for ALG1, the following enzyme in the biosynthetic pathway. The polypeptide is UDP-N-acetylglucosamine transferase subunit ALG14 (Mus musculus (Mouse)).